Consider the following 941-residue polypeptide: Cell wall protein IFF3 (941 aa).

A signal peptide spans 1 to 20 (MQLFQNILVSIALLTQVVFA). Asn36, Asn367, Asn686, Asn732, Asn790, Asn818, Asn825, Asn884, and Asn917 each carry an N-linked (GlcNAc...) asparagine glycan. Asn917 is lipidated: GPI-anchor amidated asparagine. The propeptide at 918 to 941 (GSNKESIENIKYLTLVVFGLMMFM) is removed in mature form.

The protein belongs to the HYR1/IFF family. Post-translationally, the GPI-anchor is attached to the protein in the endoplasmic reticulum and serves to target the protein to the cell surface. There, the glucosamine-inositol phospholipid moiety is cleaved off and the GPI-modified mannoprotein is covalently attached via its lipidless GPI glycan remnant to the 1,6-beta-glucan of the outer cell wall layer.

Its subcellular location is the secreted. The protein localises to the cell wall. It is found in the membrane. In terms of biological role, GPI-anchored cell wall protein involved in cell wall organization, hyphal growth, as well as in host-fungal interaction and virulence. In Candida albicans (strain SC5314 / ATCC MYA-2876) (Yeast), this protein is Cell wall protein IFF3 (IFF3).